A 134-amino-acid chain; its full sequence is Replication enhancer protein (134 aa).

The protein belongs to the geminiviridae replication enhancer protein family. In terms of assembly, homooligomer. Interacts with the replication-associated protein (REP). Interacts with host proliferating cell nuclear antigen (PCNA). Interacts with host retinoblastoma-related protein 1 (RBR1), and may thereby deregulate the host cell cycle. Oligomerization and interaction with PCNA are necessary for optimal replication enhancement.

Functionally, increases viral DNA accumulation. Enhances infectivity and symptom expression. The polypeptide is Replication enhancer protein (Tomato leaf curl virus (strain Australia) (ToLCV)).